A 232-amino-acid chain; its full sequence is Large ribosomal subunit protein uL1 (232 aa).

The protein belongs to the universal ribosomal protein uL1 family. Part of the 50S ribosomal subunit.

Its function is as follows. Binds directly to 23S rRNA. The L1 stalk is quite mobile in the ribosome, and is involved in E site tRNA release. In terms of biological role, protein L1 is also a translational repressor protein, it controls the translation of the L11 operon by binding to its mRNA. This Syntrophus aciditrophicus (strain SB) protein is Large ribosomal subunit protein uL1.